Consider the following 308-residue polypeptide: Ribosomal protein L11 methyltransferase (308 aa).

S-adenosyl-L-methionine contacts are provided by Thr-157, Gly-178, Asp-200, and Asn-243.

The protein belongs to the methyltransferase superfamily. PrmA family.

The protein resides in the cytoplasm. The enzyme catalyses L-lysyl-[protein] + 3 S-adenosyl-L-methionine = N(6),N(6),N(6)-trimethyl-L-lysyl-[protein] + 3 S-adenosyl-L-homocysteine + 3 H(+). Functionally, methylates ribosomal protein L11. The chain is Ribosomal protein L11 methyltransferase from Pelotomaculum thermopropionicum (strain DSM 13744 / JCM 10971 / SI).